The sequence spans 195 residues: Probable nicotinate-nucleotide adenylyltransferase (195 aa).

This sequence belongs to the NadD family.

The catalysed reaction is nicotinate beta-D-ribonucleotide + ATP + H(+) = deamido-NAD(+) + diphosphate. The protein operates within cofactor biosynthesis; NAD(+) biosynthesis; deamido-NAD(+) from nicotinate D-ribonucleotide: step 1/1. Catalyzes the reversible adenylation of nicotinate mononucleotide (NaMN) to nicotinic acid adenine dinucleotide (NaAD). This Chlorobaculum tepidum (strain ATCC 49652 / DSM 12025 / NBRC 103806 / TLS) (Chlorobium tepidum) protein is Probable nicotinate-nucleotide adenylyltransferase.